The following is a 210-amino-acid chain: ER membrane protein complex subunit 8 (210 aa).

The MPN domain occupies 4–150; the sequence is VKLTTQAYCK…IHVYEHHENR (147 aa).

It belongs to the EMC8/EMC9 family. As to quaternary structure, component of the ER membrane protein complex (EMC). EMC8 and EMC9 are mutually exclusive subunits of the EMC complex. As to expression, expressed in liver, pancreas, heart, lung, kidney, brain, skeletal muscle, and placenta. Expression levels are highest in pancreas and moderate in heart, skeletal muscle, and placenta.

Its subcellular location is the endoplasmic reticulum membrane. Functionally, part of the endoplasmic reticulum membrane protein complex (EMC) that enables the energy-independent insertion into endoplasmic reticulum membranes of newly synthesized membrane proteins. Preferentially accommodates proteins with transmembrane domains that are weakly hydrophobic or contain destabilizing features such as charged and aromatic residues. Involved in the cotranslational insertion of multi-pass membrane proteins in which stop-transfer membrane-anchor sequences become ER membrane spanning helices. It is also required for the post-translational insertion of tail-anchored/TA proteins in endoplasmic reticulum membranes. By mediating the proper cotranslational insertion of N-terminal transmembrane domains in an N-exo topology, with translocated N-terminus in the lumen of the ER, controls the topology of multi-pass membrane proteins like the G protein-coupled receptors. By regulating the insertion of various proteins in membranes, it is indirectly involved in many cellular processes. The sequence is that of ER membrane protein complex subunit 8 (EMC8) from Homo sapiens (Human).